The primary structure comprises 448 residues: Protein arginine N-methyltransferase 2 (448 aa).

Interaction with ESR1 stretches follow at residues methionine 1–lysine 289 and lysine 145–alanine 287. The SH3 domain maps to leucine 42–glutamate 101. Asymmetric dimethylarginine is present on residues arginine 73 and arginine 84. The tract at residues histidine 95–valine 219 is interaction with RB1. Residues aspartate 111–glutamate 414 enclose the SAM-dependent MTase PRMT-type domain. 5 residues coordinate S-adenosyl-L-methionine: histidine 124, arginine 133, glycine 157, glutamate 180, and glutamate 209. Catalysis depends on residues glutamate 223 and glutamate 232.

It belongs to the class I-like SAM-binding methyltransferase superfamily. Protein arginine N-methyltransferase family. Self-associates. Interacts with HNRNPUL1. Interacts with NFKBIA. Interacts with NCOA6 coactivator. Interacts (via SH3 domain) with PRMT8. Interacts with AR. Interacts with ESR1, ESR2, PGR, PPARG, RARA, RXRA and THRB. Interacts with RB1 and E2F1. As to expression, expressed in liver, pancreas, lung, brain, skeletal muscle, heart, muscle and fat.

Its subcellular location is the cytoplasm. The protein localises to the nucleus. It carries out the reaction L-arginyl-[protein] + 2 S-adenosyl-L-methionine = N(omega),N(omega)-dimethyl-L-arginyl-[protein] + 2 S-adenosyl-L-homocysteine + 2 H(+). Its function is as follows. Arginine methyltransferase that methylates the guanidino nitrogens of arginyl residues in proteins such as STAT3, FBL, histone H4. May inhibit NF-kappa-B transcription, and promote apoptosis. Represses E2F1 transcriptional activity (in a RB1-dependent manner). Has a negative regulation effect on G1 to S transition of mitotic cell cycle. Involved in growth regulation. Acts as a coactivator (with NCOA2) of the androgen receptor (AR)-mediated transactivation. Acts as a coactivator (with estrogen) of estrogen receptor (ER)-mediated transactivation. Enhances PGR, PPARG, RARA-mediated transactivation. This is Protein arginine N-methyltransferase 2 (Prmt2) from Mus musculus (Mouse).